We begin with the raw amino-acid sequence, 263 residues long: Indole-3-glycerol phosphate synthase (263 aa).

The protein belongs to the TrpC family.

It carries out the reaction 1-(2-carboxyphenylamino)-1-deoxy-D-ribulose 5-phosphate + H(+) = (1S,2R)-1-C-(indol-3-yl)glycerol 3-phosphate + CO2 + H2O. Its pathway is amino-acid biosynthesis; L-tryptophan biosynthesis; L-tryptophan from chorismate: step 4/5. This is Indole-3-glycerol phosphate synthase from Acidithiobacillus ferrooxidans (strain ATCC 23270 / DSM 14882 / CIP 104768 / NCIMB 8455) (Ferrobacillus ferrooxidans (strain ATCC 23270)).